Here is a 381-residue protein sequence, read N- to C-terminus: O-antigen chain mannosyltransferase B (381 aa).

Belongs to the glycosyltransferase group 1 family. Glycosyltransferase 4 subfamily.

It carries out the reaction alpha-D-mannosyl-(1-&gt;3)-N-acetyl-alpha-D-glucosaminyl-di-trans,octa-cis-undecaprenyl diphosphate + 2 GDP-alpha-D-mannose = alpha-D-mannosyl-(1-&gt;3)-alpha-D-mannosyl-(1-&gt;3)-alpha-D-mannosyl-(1-&gt;3)-N-acetyl-alpha-D-glucosaminyl-di-trans,octa-cis-undecaprenyl diphosphate + 2 GDP + 2 H(+). Its pathway is bacterial outer membrane biogenesis; LPS O-antigen biosynthesis. Functionally, mannosyltransferase involved in the biosynthesis of the repeat unit of the lipopolysaccharide (LPS) O-antigen region. Catalyzes the transfer of two alpha-(1-&gt;3)-linked mannose residues to the product of the WbdC enzyme during the synthesis of the adapter region. In Escherichia coli, this protein is O-antigen chain mannosyltransferase B.